Consider the following 154-residue polypeptide: 6,7-dimethyl-8-ribityllumazine synthase (154 aa).

5-amino-6-(D-ribitylamino)uracil is bound by residues Phe-22, 56–58 (AFE), and 80–82 (AVI). 85–86 (ST) is a binding site for (2S)-2-hydroxy-3-oxobutyl phosphate. Catalysis depends on His-88, which acts as the Proton donor. Phe-113 contacts 5-amino-6-(D-ribitylamino)uracil. Arg-127 serves as a coordination point for (2S)-2-hydroxy-3-oxobutyl phosphate.

The protein belongs to the DMRL synthase family.

It carries out the reaction (2S)-2-hydroxy-3-oxobutyl phosphate + 5-amino-6-(D-ribitylamino)uracil = 6,7-dimethyl-8-(1-D-ribityl)lumazine + phosphate + 2 H2O + H(+). It participates in cofactor biosynthesis; riboflavin biosynthesis; riboflavin from 2-hydroxy-3-oxobutyl phosphate and 5-amino-6-(D-ribitylamino)uracil: step 1/2. Its function is as follows. Catalyzes the formation of 6,7-dimethyl-8-ribityllumazine by condensation of 5-amino-6-(D-ribitylamino)uracil with 3,4-dihydroxy-2-butanone 4-phosphate. This is the penultimate step in the biosynthesis of riboflavin. The chain is 6,7-dimethyl-8-ribityllumazine synthase from Clostridium beijerinckii (strain ATCC 51743 / NCIMB 8052) (Clostridium acetobutylicum).